The chain runs to 207 residues: Large ribosomal subunit protein uL4 (207 aa).

Positions 49 to 78 are disordered; sequence HAVKNRSAVSGGGRKPWRQKGTGRARQGSI.

Belongs to the universal ribosomal protein uL4 family. In terms of assembly, part of the 50S ribosomal subunit.

One of the primary rRNA binding proteins, this protein initially binds near the 5'-end of the 23S rRNA. It is important during the early stages of 50S assembly. It makes multiple contacts with different domains of the 23S rRNA in the assembled 50S subunit and ribosome. In terms of biological role, forms part of the polypeptide exit tunnel. This Streptococcus equi subsp. zooepidemicus (strain MGCS10565) protein is Large ribosomal subunit protein uL4.